We begin with the raw amino-acid sequence, 505 residues long: Protein phosphatase 1J (505 aa).

Positions 1 to 103 (MLNRVRSAVA…PPDTGRRLPW (103 aa)) are disordered. The span at 27–50 (DLPNAASAPPAAAPEAPRSPPAKA) shows a compositional bias: low complexity. Phosphoserine is present on residues Ser66 and Ser76. Positions 104–498 (STGYAEVINA…DDISVFVIPL (395 aa)) constitute a PPM-type phosphatase domain.

Belongs to the PP2C family. In terms of assembly, interacts with UBE2I/UBC9.

The catalysed reaction is O-phospho-L-seryl-[protein] + H2O = L-seryl-[protein] + phosphate. The enzyme catalyses O-phospho-L-threonyl-[protein] + H2O = L-threonyl-[protein] + phosphate. This is Protein phosphatase 1J (PPM1J) from Homo sapiens (Human).